A 1085-amino-acid polypeptide reads, in one-letter code: Toxin VasX (1085 aa).

The disordered stretch occupies residues 1–20 (MSNPNQAAKTGQTNDAQNPA). 4 helical membrane passes run 753 to 773 (ALGE…AISA), 813 to 833 (IALV…ESWG), 860 to 880 (IIFY…PSIA), and 884 to 904 (AGWM…GVIL).

It localises to the secreted. The protein resides in the host membrane. Its function is as follows. Toxin secreted by the type VI (T6SS) secretion system that acts on prokaryotic target cells. Acts in conjunction with VasW, an accessory protein to VasX, to compromise the inner membrane of prokaryotic target cells. The polypeptide is Toxin VasX (Vibrio cholerae serotype O1 (strain ATCC 39315 / El Tor Inaba N16961)).